We begin with the raw amino-acid sequence, 303 residues long: Proteasome subunit beta (303 aa).

A propeptide spans 1 to 67 (MTWQFPDRLS…SGGTGQLPHG (67 aa)) (removed in mature form; by autocatalysis). Thr-68 acts as the Nucleophile in catalysis.

It belongs to the peptidase T1B family. As to quaternary structure, the 20S proteasome core is composed of 14 alpha and 14 beta subunits that assemble into four stacked heptameric rings, resulting in a barrel-shaped structure. The two inner rings, each composed of seven catalytic beta subunits, are sandwiched by two outer rings, each composed of seven alpha subunits. The catalytic chamber with the active sites is on the inside of the barrel. Has a gated structure, the ends of the cylinder being occluded by the N-termini of the alpha-subunits. Is capped by the proteasome-associated ATPase, ARC.

It is found in the cytoplasm. It catalyses the reaction Cleavage of peptide bonds with very broad specificity.. It functions in the pathway protein degradation; proteasomal Pup-dependent pathway. The formation of the proteasomal ATPase ARC-20S proteasome complex, likely via the docking of the C-termini of ARC into the intersubunit pockets in the alpha-rings, may trigger opening of the gate for substrate entry. Interconversion between the open-gate and close-gate conformations leads to a dynamic regulation of the 20S proteasome proteolysis activity. Its function is as follows. Component of the proteasome core, a large protease complex with broad specificity involved in protein degradation. The chain is Proteasome subunit beta from Mycolicibacterium paratuberculosis (strain ATCC BAA-968 / K-10) (Mycobacterium paratuberculosis).